The chain runs to 152 residues: Flagellar assembly factor FliW (152 aa).

It belongs to the FliW family. In terms of assembly, interacts with translational regulator CsrA and flagellin(s).

The protein resides in the cytoplasm. In terms of biological role, acts as an anti-CsrA protein, binds CsrA and prevents it from repressing translation of its target genes, one of which is flagellin. Binds to flagellin and participates in the assembly of the flagellum. This Caldicellulosiruptor saccharolyticus (strain ATCC 43494 / DSM 8903 / Tp8T 6331) protein is Flagellar assembly factor FliW.